Reading from the N-terminus, the 333-residue chain is Bacteriocin helveticin-J (333 aa).

In terms of biological role, this heat-sensitive bacteriocin inhibits the growth of closely related Lactobacillus species. The polypeptide is Bacteriocin helveticin-J (hlv) (Lactobacillus helveticus (Lactobacillus suntoryeus)).